The primary structure comprises 356 residues: MRVTDFSFELPESLIAHYPMPERSSCRLLSLDGPTGALTHGTFTDLLDKLNPGDLLVFNNTRVIPARLFGRKASGGKIEVLVERMLDDKRILAHIRASKAPKPGAELLLGDDESINATMTARHGALFEVEFNDQRSVLDILNSIGHMPLPPYIDRPDEDADRELYQTVYSEKPGAVAAPTAGLHFDEPLLEKLRAKGVEMAFVTLHVGAGTFQPVRVDTIEDHIMHSEYAEVPQDVVDAVLAAKARGNRVIAVGTTSVRSLESAAQAAKNDLIEPLFDDTQIFIYPGFQYKVVDALVTNFHLPESTLIMLVSAFAGYQHTMNAYKAAVEEKYRFFSYGDAMFITYNPQAINERVGE.

This sequence belongs to the QueA family. In terms of assembly, monomer.

Its subcellular location is the cytoplasm. The enzyme catalyses 7-aminomethyl-7-carbaguanosine(34) in tRNA + S-adenosyl-L-methionine = epoxyqueuosine(34) in tRNA + adenine + L-methionine + 2 H(+). It participates in tRNA modification; tRNA-queuosine biosynthesis. Its function is as follows. Transfers and isomerizes the ribose moiety from AdoMet to the 7-aminomethyl group of 7-deazaguanine (preQ1-tRNA) to give epoxyqueuosine (oQ-tRNA). This is S-adenosylmethionine:tRNA ribosyltransferase-isomerase from Escherichia coli O6:H1 (strain CFT073 / ATCC 700928 / UPEC).